Consider the following 158-residue polypeptide: SsrA-binding protein (158 aa).

The interval 133 to 158 is disordered; the sequence is KIHDKRETEAKRDWNRQKQRLLKDNA. Positions 136 to 158 are enriched in basic and acidic residues; that stretch reads DKRETEAKRDWNRQKQRLLKDNA.

It belongs to the SmpB family.

Its subcellular location is the cytoplasm. Its function is as follows. Required for rescue of stalled ribosomes mediated by trans-translation. Binds to transfer-messenger RNA (tmRNA), required for stable association of tmRNA with ribosomes. tmRNA and SmpB together mimic tRNA shape, replacing the anticodon stem-loop with SmpB. tmRNA is encoded by the ssrA gene; the 2 termini fold to resemble tRNA(Ala) and it encodes a 'tag peptide', a short internal open reading frame. During trans-translation Ala-aminoacylated tmRNA acts like a tRNA, entering the A-site of stalled ribosomes, displacing the stalled mRNA. The ribosome then switches to translate the ORF on the tmRNA; the nascent peptide is terminated with the 'tag peptide' encoded by the tmRNA and targeted for degradation. The ribosome is freed to recommence translation, which seems to be the essential function of trans-translation. The protein is SsrA-binding protein of Ruegeria pomeroyi (strain ATCC 700808 / DSM 15171 / DSS-3) (Silicibacter pomeroyi).